Consider the following 474-residue polypeptide: Glutamate--tRNA ligase (474 aa).

Positions 9–19 match the 'HIGH' region motif; sequence PSPTGLLHMGG. Positions 238-242 match the 'KMSKS' region motif; that stretch reads KLSKR. Residue Lys-241 coordinates ATP.

This sequence belongs to the class-I aminoacyl-tRNA synthetase family. Glutamate--tRNA ligase type 1 subfamily. In terms of assembly, monomer.

It is found in the cytoplasm. It carries out the reaction tRNA(Glu) + L-glutamate + ATP = L-glutamyl-tRNA(Glu) + AMP + diphosphate. Its function is as follows. Catalyzes the attachment of glutamate to tRNA(Glu) in a two-step reaction: glutamate is first activated by ATP to form Glu-AMP and then transferred to the acceptor end of tRNA(Glu). The chain is Glutamate--tRNA ligase from Buchnera aphidicola subsp. Cinara cedri (strain Cc).